A 380-amino-acid polypeptide reads, in one-letter code: Glucose-1-phosphate adenylyltransferase (380 aa).

Alpha-D-glucose 1-phosphate contacts are provided by residues G164, 179–180 (EK), and S190.

The protein belongs to the bacterial/plant glucose-1-phosphate adenylyltransferase family. Homotetramer.

The catalysed reaction is alpha-D-glucose 1-phosphate + ATP + H(+) = ADP-alpha-D-glucose + diphosphate. The protein operates within glycan biosynthesis; glycogen biosynthesis. In terms of biological role, involved in the biosynthesis of ADP-glucose, a building block required for the elongation reactions to produce glycogen. Catalyzes the reaction between ATP and alpha-D-glucose 1-phosphate (G1P) to produce pyrophosphate and ADP-Glc. This is Glucose-1-phosphate adenylyltransferase from Lactococcus lactis subsp. lactis (strain IL1403) (Streptococcus lactis).